We begin with the raw amino-acid sequence, 186 residues long: Auxin-responsive protein IAA4 (186 aa).

Positions 18 to 22 (LRLGL) match the EAR-like (transcriptional repression) motif. Residues 25 to 62 (TEETVSCGKSNKRVLPEATEKEIESTGKTETASPPKAQ) form a disordered region. Residues 38–51 (VLPEATEKEIESTG) are compositionally biased toward basic and acidic residues. Residues 88–175 (GNYVKVSMDG…SCKRLRIMKG (88 aa)) enclose the PB1 domain.

The protein belongs to the Aux/IAA family. In terms of assembly, homodimers and heterodimers. Interacts with TPL. Preferentially expressed in stems, leaves and flowers.

It localises to the nucleus. Its function is as follows. Aux/IAA proteins are short-lived transcriptional factors that function as repressors of early auxin response genes at low auxin concentrations. Repression is thought to result from the interaction with auxin response factors (ARFs), proteins that bind to the auxin-responsive promoter element (AuxRE). Formation of heterodimers with ARF proteins may alter their ability to modulate early auxin response genes expression. In Arabidopsis thaliana (Mouse-ear cress), this protein is Auxin-responsive protein IAA4 (IAA4).